A 201-amino-acid polypeptide reads, in one-letter code: Recombination protein RecR (201 aa).

The C4-type zinc-finger motif lies at 60-75 (CSCCGNVDTIDPCTVC). The region spanning 83–178 (SMIIVVEDVS…KTTRLAHGVP (96 aa)) is the Toprim domain.

It belongs to the RecR family.

Its function is as follows. May play a role in DNA repair. It seems to be involved in an RecBC-independent recombinational process of DNA repair. It may act with RecF and RecO. This Allorhizobium ampelinum (strain ATCC BAA-846 / DSM 112012 / S4) (Agrobacterium vitis (strain S4)) protein is Recombination protein RecR.